An 825-amino-acid polypeptide reads, in one-letter code: Putative NAD(+)--arginine ADP-ribosyltransferase Mav (825 aa).

Residues 435 to 673 are disordered; that stretch reads ALKGLKKPPG…SGSDHHLPLH (239 aa). 2 stretches are compositionally biased toward pro residues: residues 443 to 457 and 468 to 491; these read PGVP…PAAP and SGKP…PLPH. Low complexity predominate over residues 560 to 579; the sequence is PAADTPAPSAPAASMSAASG. Residues 580 to 589 are compositionally biased toward pro residues; that stretch reads PPMPPTPSLP. A compositionally biased stretch (low complexity) spans 590–599; it reads EPASLPSGPS. The TR mART core domain occupies 650–825; it reads KNANGHGPHD…GRTIIEMIER (176 aa). Residues 656-670 show a composition bias toward basic and acidic residues; it reads GPHDASLDSGSDHHL. NAD(+) is bound by residues 687–699, 730–733, and Glu-750; these read TGPG…FALR and RGTN. Arg-730 is a catalytic residue. Catalysis depends on residues Ser-755 and Glu-795. Glu-795 lines the NAD(+) pocket.

Belongs to the Arg-specific ADP-ribosyltransferase family.

The protein localises to the secreted. It carries out the reaction L-arginyl-[protein] + NAD(+) = N(omega)-(ADP-D-ribosyl)-L-arginyl-[protein] + nicotinamide + H(+). In terms of biological role, a probable mono(ADP-ribosyl)transferase, it may ADP-ribosylate Arg in target protein(s). The protein is Putative NAD(+)--arginine ADP-ribosyltransferase Mav of Mycobacterium avium (strain 104).